A 141-amino-acid polypeptide reads, in one-letter code: Hemoglobin subunit alpha (141 aa).

One can recognise a Globin domain in the interval 1–141 (VLSDKDKTNV…VSTVLTSKYR (141 aa)). Phosphoserine is present on Ser3. Lys7 carries the post-translational modification N6-succinyllysine. At Thr8 the chain carries Phosphothreonine. Residue Lys11 is modified to N6-succinyllysine. Lys16 carries the N6-acetyllysine; alternate modification. The residue at position 16 (Lys16) is an N6-succinyllysine; alternate. At Tyr24 the chain carries Phosphotyrosine. Ser35 carries the post-translational modification Phosphoserine. Lys40 is modified (N6-succinyllysine). The residue at position 49 (Ser49) is a Phosphoserine. His58 serves as a coordination point for O2. His87 is a binding site for heme b. Phosphoserine is present on Ser102. At Thr108 the chain carries Phosphothreonine. Ser124 carries the phosphoserine modification. 2 positions are modified to phosphothreonine: Thr134 and Thr137. The residue at position 138 (Ser138) is a Phosphoserine.

Belongs to the globin family. As to quaternary structure, heterotetramer of two alpha chains and two beta chains. Red blood cells.

Its function is as follows. Involved in oxygen transport from the lung to the various peripheral tissues. Hemopressin acts as an antagonist peptide of the cannabinoid receptor CNR1. Hemopressin-binding efficiently blocks cannabinoid receptor CNR1 and subsequent signaling. This is Hemoglobin subunit alpha (HBA) from Elephas maximus (Indian elephant).